A 279-amino-acid polypeptide reads, in one-letter code: Putative hydroxypyruvate isomerase (279 aa).

Active-site proton donor/acceptor residues include E155 and E256. Positions G260–R279 are disordered.

It belongs to the hyi family.

The enzyme catalyses 3-hydroxypyruvate = 2-hydroxy-3-oxopropanoate. Functionally, catalyzes the reversible isomerization between hydroxypyruvate and 2-hydroxy-3-oxopropanoate (also termed tartronate semialdehyde). In Streptomyces coelicolor (strain ATCC BAA-471 / A3(2) / M145), this protein is Putative hydroxypyruvate isomerase.